Reading from the N-terminus, the 1714-residue chain is Protein ESSENTIAL FOR POTEXVIRUS ACCUMULATION 1 (1714 aa).

Disordered regions lie at residues 1–296 (MANS…PPHL) and 358–511 (IVSS…SKGE). S39 carries the post-translational modification Phosphoserine. Over residues 58 to 75 (DPNQYGNHSDVVRTTGNG) the composition is skewed to polar residues. 2 stretches are compositionally biased toward basic and acidic residues: residues 96 to 136 (ESGR…DRWD) and 143 to 203 (GEQR…REKG). Composition is skewed to polar residues over residues 230-244 (HNQS…SFSH) and 268-278 (IFTSAPNQSHP). Composition is skewed to basic and acidic residues over residues 389-422 (GSRE…EASH) and 430-441 (RGNEAPVRELKE). Residues 444–463 (MQGNAHVQSASPWRQSSGGE) show a composition bias toward polar residues. Positions 464 to 483 (RSNRNSHDWNDPSADSRLKS) are enriched in basic and acidic residues. The GYF domain occupies 546 to 597 (ELSLYYKDPQGLIQGPFSGSDIIGWFEAGYFGIDLLVRLASAPNDSPFSLLG). Disordered regions lie at residues 728–753 (ESAN…PSSD), 1092–1205 (VKNN…KPAP), and 1437–1566 (QEKM…GKKE). A compositionally biased stretch (polar residues) spans 737-753 (ENVSENAQQPTRSPSSD). Positions 1142 to 1162 (SEIKGKTKKSADTLIDNDTHL) are enriched in basic and acidic residues. The segment covering 1163–1180 (IKSSTATASNTSQMSSEV) has biased composition (polar residues). Positions 1467–1488 (ASWSRSASSPSQAVSQSSSQSK) are enriched in low complexity. Residues 1515 to 1544 (LTSQNSWGTKNTPGKVNAGTSLNRQKSVSM) are compositionally biased toward polar residues.

In terms of assembly, associates with eIF4E initiation factors and the ribosome complex, thus likely contributing to the proper translation of target proteins. Interacts directly with RPL18B and eIF4E1. Binds to SMG7. In terms of processing, quickly phosphorylated at Ser-39 after treatment of seedlings with the pathogen-associated molecular pattern (PAMP) flg22. Expressed in all tissues, mostly in flowers, leaves and stems, and, to a lower extent, in roots (at protein level).

The protein resides in the cytoplasm. The protein localises to the cytosol. Its subcellular location is the P-body. In terms of biological role, translational repressor involved in the negative regulation of immune receptor accumulation via the inhibition of nucleotide-binding leucine-rich repeat (NLR) receptor mediated defense. Represses NLR protein accumulation (e.g. SNC1, RPS4, RPM1 and RPS2). Together with SMG7, helps to restrict effector-triggered immunity (ETI) cell death induction during pathogen infection in a salicylic acid- (SA) and reactive oxygen species- (ROS) independent manner. Required for pathogen-associated molecular pattern (PAMP)-induced suppression of necrotrophic fungal (e.g. F.moniliforme) pathogen-derived mycotoxin-triggered (e.g. fumonisin B1) cell death. Its function is as follows. (Microbial infection) Required for early steps of plantago asiatica mosaic virus (PlAMV, genus Potexvirus) infection. Facilitates pathogenic growth of avirulent hemi-biotrophic bacteria P.syringae pv. tomato (Pst) DC3000 (e.g. AvrRps4 and AvrRpm1) and of the compatible oomycete H.arabidopsidis Noco2. This is Protein ESSENTIAL FOR POTEXVIRUS ACCUMULATION 1 from Arabidopsis thaliana (Mouse-ear cress).